Consider the following 135-residue polypeptide: HTH-type transcriptional repressor RghR (135 aa).

One can recognise an HTH cro/C1-type domain in the interval 8-63 (LRALREERKLTVNQLATYSGVSAAGISRIENGKRGVPKPATIKKLAEALKIPYEGL). Positions 19 to 38 (VNQLATYSGVSAAGISRIEN) form a DNA-binding region, H-T-H motif.

Represses the expression of yvaM and both rapG and rapH. Binds directly to the promoter regions of yvaM, rapG and rapH. The protein is HTH-type transcriptional repressor RghR (rghR) of Bacillus subtilis (strain 168).